Consider the following 376-residue polypeptide: Putative F-box protein At1g53370 (376 aa).

The 50-residue stretch at 22-71 (RNYIDSIPVDLLIDILSRFPPKSIARFYCVSKLWESILRGPDFTELYLTK) folds into the F-box domain.

This Arabidopsis thaliana (Mouse-ear cress) protein is Putative F-box protein At1g53370.